The sequence spans 271 residues: MNRSIGVLDSGVGGLTVARELMRQLPHEQIIYVGDTLRCPYGPRPEEEIRQFTWEMIDFLVAQGVKLIVIACNTATAVVLKEARQKLSIPVIGVIDPGARAAVKVTRSKRIGVIGTKMTIESNSYEKALRHVEGQVVVESLSCPPFVPLVESSQTSGPYVERVVANTLKPLLSYDMDTLILGCTHYPLLAEVIGRVIGPNVQLISSGDETALEVSALLDYNGITADLDRIPEHVYHATGDTRSFERIASDWLHHPVQAKRLVLGTEEEKCV.

Substrate is bound by residues 9-10 (DS) and 41-42 (YG). C72 (proton donor/acceptor) is an active-site residue. 73-74 (NT) lines the substrate pocket. The Proton donor/acceptor role is filled by C183. Substrate is bound at residue 184-185 (TH).

This sequence belongs to the aspartate/glutamate racemases family.

The enzyme catalyses L-glutamate = D-glutamate. It participates in cell wall biogenesis; peptidoglycan biosynthesis. Provides the (R)-glutamate required for cell wall biosynthesis. The sequence is that of Glutamate racemase from Exiguobacterium sibiricum (strain DSM 17290 / CCUG 55495 / CIP 109462 / JCM 13490 / 255-15).